The chain runs to 268 residues: Testis-specific serine/threonine-protein kinase 3 (268 aa).

One can recognise a Protein kinase domain in the interval 10–265; that stretch reads YQLGKTIGEG…IEEVSWHPWL (256 aa). ATP contacts are provided by residues 16–24 and lysine 39; that span reads IGEGTYSKV. Aspartate 134 (proton acceptor) is an active-site residue. Serine 166 carries the post-translational modification Phosphoserine; by autocatalysis. Residue threonine 168 is modified to Phosphothreonine; by PDPK1.

Belongs to the protein kinase superfamily. CAMK Ser/Thr protein kinase family. The cofactor is Mg(2+). Mn(2+) is required as a cofactor. Autophosphorylated at Ser-166. Phosphorylation at Thr-168 by PDPK1 activates the serine/threonine protein kinase activity. Developmentally expressed in testicular germ cells. In adult testis, expression was detected in round and condensing spermatids, but not in meiotic pachytene spermatocytes. Not expressed in brain, ovary, kidney, liver or early embryonic cells.

The protein localises to the cell projection. Its subcellular location is the cilium. The protein resides in the flagellum. It catalyses the reaction L-seryl-[protein] + ATP = O-phospho-L-seryl-[protein] + ADP + H(+). The catalysed reaction is L-threonyl-[protein] + ATP = O-phospho-L-threonyl-[protein] + ADP + H(+). Activated by phosphorylation on Thr-168 by PDPK1. In terms of biological role, serine/threonine protein kinase required for spermatid development and male fertility. In Mus musculus (Mouse), this protein is Testis-specific serine/threonine-protein kinase 3.